Here is a 178-residue protein sequence, read N- to C-terminus: Large ribosomal subunit protein uL6 (178 aa).

The segment at 159–178 is disordered; that stretch reads GKGIRYEGEHVRRKEGKTGK.

Belongs to the universal ribosomal protein uL6 family. In terms of assembly, part of the 50S ribosomal subunit.

Functionally, this protein binds to the 23S rRNA, and is important in its secondary structure. It is located near the subunit interface in the base of the L7/L12 stalk, and near the tRNA binding site of the peptidyltransferase center. This Listeria monocytogenes serotype 4b (strain CLIP80459) protein is Large ribosomal subunit protein uL6.